A 347-amino-acid chain; its full sequence is NADH-ubiquinone oxidoreductase chain 2 (347 aa).

Transmembrane regions (helical) follow at residues 3-23 (PLAL…TMMS), 59-79 (YFMT…INLM), 93-115 (VASN…HFWV), 150-170 (NTNL…WGGL), 178-198 (ILAY…PFNP), 200-220 (LTLL…MILA), 240-260 (MTIM…LSGF), 274-294 (NSII…YFYT), and 326-346 (LPTL…ISML).

Belongs to the complex I subunit 2 family. In terms of assembly, core subunit of respiratory chain NADH dehydrogenase (Complex I) which is composed of 45 different subunits. Interacts with TMEM242.

It localises to the mitochondrion inner membrane. The catalysed reaction is a ubiquinone + NADH + 5 H(+)(in) = a ubiquinol + NAD(+) + 4 H(+)(out). In terms of biological role, core subunit of the mitochondrial membrane respiratory chain NADH dehydrogenase (Complex I) which catalyzes electron transfer from NADH through the respiratory chain, using ubiquinone as an electron acceptor. Essential for the catalytic activity and assembly of complex I. This chain is NADH-ubiquinone oxidoreductase chain 2, found in Elephas maximus (Indian elephant).